We begin with the raw amino-acid sequence, 646 residues long: Macrolide export ATP-binding/permease protein MacB (646 aa).

Residues 7 to 245 enclose the ABC transporter domain; the sequence is IRLEDICKTF…EATLQPHEEI (239 aa). ATP is bound at residue 43 to 50; it reads GASGSGKS. A run of 4 helical transmembrane segments spans residues 274-294, 528-548, 572-592, and 609-629; these read VLTLLGIIIGVSSVVTMLAIG, VAAISLLVGGIGVMNIMLVSV, FIIEALSVSAIGGAIGVILGL, and FGPVLLAFACAFATGLIFGFL.

It belongs to the ABC transporter superfamily. Macrolide exporter (TC 3.A.1.122) family. In terms of assembly, homodimer.

The protein resides in the cell inner membrane. Its function is as follows. Non-canonical ABC transporter that contains transmembrane domains (TMD), which form a pore in the inner membrane, and an ATP-binding domain (NBD), which is responsible for energy generation. Confers resistance against macrolides. The sequence is that of Macrolide export ATP-binding/permease protein MacB from Brucella abortus (strain 2308).